A 185-amino-acid chain; its full sequence is Elongation factor P (185 aa).

Belongs to the elongation factor P family.

Its subcellular location is the cytoplasm. The protein operates within protein biosynthesis; polypeptide chain elongation. In terms of biological role, involved in peptide bond synthesis. Stimulates efficient translation and peptide-bond synthesis on native or reconstituted 70S ribosomes in vitro. Probably functions indirectly by altering the affinity of the ribosome for aminoacyl-tRNA, thus increasing their reactivity as acceptors for peptidyl transferase. The sequence is that of Elongation factor P from Finegoldia magna (strain ATCC 29328 / DSM 20472 / WAL 2508) (Peptostreptococcus magnus).